Here is a 694-residue protein sequence, read N- to C-terminus: Lon-like protease BrxL (694 aa).

It belongs to the BrxL family.

Its function is as follows. BREX systems (bacteriophage exclusion) provide immunity against bacteriophage. Part of a type 1 BREX system which protects against dsDNA phage. This system allows phage adsorption but prevents phage DNA replication, without degradation of the phage DNA. Methylation of bacterial DNA by PglX guides self/non-self discrimination. When the brxA-brxB-brxC-pglX-pglZ-brxL genes are transformed into a susceptible E.coli strain (BW25113) they confer very high resistance to infection by bacteriophage VR7 and VpaE1, about 100-fold protection against lambda, T5 and T7 and no protection against RNA phage Qbeta, ssDNA phage M13 or dSDNA phage T4 and VR5. Glycosylated phage DNA is not susceptible to BREX. The BREX system does not confer resistance to lysogenic lambda phage, i.e. prophage that are integrated into the chromosomal DNA and then induced to form phage. Expression of this protein alone is toxic. This is Lon-like protease BrxL from Escherichia coli O9:H4 (strain HS).